The sequence spans 347 residues: Ferredoxin--NADP reductase 1 (347 aa).

FAD-binding residues include Thr-26, Asp-45, Gln-53, Tyr-58, Val-98, Phe-133, Asp-298, and Ser-339.

It belongs to the ferredoxin--NADP reductase type 2 family. As to quaternary structure, homodimer. The cofactor is FAD.

It catalyses the reaction 2 reduced [2Fe-2S]-[ferredoxin] + NADP(+) + H(+) = 2 oxidized [2Fe-2S]-[ferredoxin] + NADPH. This is Ferredoxin--NADP reductase 1 from Chloroherpeton thalassium (strain ATCC 35110 / GB-78).